The primary structure comprises 292 residues: UPF0749 protein Mb1856 (292 aa).

The first 28 residues, 1 to 28, serve as a signal peptide directing secretion; that stretch reads MSENRPEPVAAETSAATTARHSQADAGA. Positions 1–30 are disordered; that stretch reads MSENRPEPVAAETSAATTARHSQADAGAHD. The next 3 helical transmembrane spans lie at 68–88, 152–172, and 229–249; these read VFGTLAILLCLVLGVAIVTQV, AALSILVGAVGATGPGVMITI, and VLSPPYSILAIGDPPTLAAAM.

Belongs to the UPF0749 family.

It is found in the cell membrane. The polypeptide is UPF0749 protein Mb1856 (Mycobacterium bovis (strain ATCC BAA-935 / AF2122/97)).